The chain runs to 147 residues: Cyanate hydratase (147 aa).

Active-site residues include Arg-88, Glu-91, and Ser-114.

The protein belongs to the cyanase family.

It catalyses the reaction cyanate + hydrogencarbonate + 3 H(+) = NH4(+) + 2 CO2. Functionally, catalyzes the reaction of cyanate with bicarbonate to produce ammonia and carbon dioxide. This Methylibium petroleiphilum (strain ATCC BAA-1232 / LMG 22953 / PM1) protein is Cyanate hydratase.